The following is a 309-amino-acid chain: Ribosomal RNA small subunit methyltransferase H (309 aa).

S-adenosyl-L-methionine-binding positions include A36–H38, D55, F81, D102, and Q109.

The protein belongs to the methyltransferase superfamily. RsmH family.

Its subcellular location is the cytoplasm. It carries out the reaction cytidine(1402) in 16S rRNA + S-adenosyl-L-methionine = N(4)-methylcytidine(1402) in 16S rRNA + S-adenosyl-L-homocysteine + H(+). Functionally, specifically methylates the N4 position of cytidine in position 1402 (C1402) of 16S rRNA. The protein is Ribosomal RNA small subunit methyltransferase H of Mycoplasma genitalium (strain ATCC 33530 / DSM 19775 / NCTC 10195 / G37) (Mycoplasmoides genitalium).